The following is an 834-amino-acid chain: Putative COX1/OXI3 intron 1 protein (834 aa).

The segment at Met-162 to Gly-188 is disordered. Residues Asn-167 to Gly-181 show a composition bias toward polar residues. The region spanning Leu-296 to Ile-577 is the Reverse transcriptase domain.

The protein resides in the mitochondrion. The polypeptide is Putative COX1/OXI3 intron 1 protein (AI1) (Saccharomyces cerevisiae (strain ATCC 204508 / S288c) (Baker's yeast)).